We begin with the raw amino-acid sequence, 261 residues long: 5-oxoprolinase subunit A (261 aa).

The protein belongs to the LamB/PxpA family. As to quaternary structure, forms a complex composed of PxpA, PxpB and PxpC.

The catalysed reaction is 5-oxo-L-proline + ATP + 2 H2O = L-glutamate + ADP + phosphate + H(+). Its function is as follows. Catalyzes the cleavage of 5-oxoproline to form L-glutamate coupled to the hydrolysis of ATP to ADP and inorganic phosphate. In Symbiobacterium thermophilum (strain DSM 24528 / JCM 14929 / IAM 14863 / T), this protein is 5-oxoprolinase subunit A.